Here is a 183-residue protein sequence, read N- to C-terminus: MSIFSRLKKVVAGDDYLDDDYGTELEYEDGLEPSDSTLDRGGAIAPIGSFDDGDPFASSNVIGMPGITSAAAEVLVMEPRSFDEMPKTIQALRERKTIILNLTMMEPDQAQRAVDFVAGGTYAIDGHQERVGESIFLFAPSCVTVTTASSEESAAPSVMAREEEATAPAAPSPAWGTQDAING.

The tract at residues 149–183 is disordered; the sequence is SSEESAAPSVMAREEEATAPAAPSPAWGTQDAING.

The protein belongs to the SepF family. As to quaternary structure, homodimer. Interacts with FtsZ.

The protein localises to the cytoplasm. In terms of biological role, cell division protein that is part of the divisome complex and is recruited early to the Z-ring. Probably stimulates Z-ring formation, perhaps through the cross-linking of FtsZ protofilaments. Its function overlaps with FtsA. The polypeptide is Cell division protein SepF (Synechococcus sp. (strain RCC307)).